Consider the following 112-residue polypeptide: Macrodomain Ori protein (112 aa).

The interval 91 to 112 is disordered; that stretch reads FHTLSGGKPQVEGAEDYTEADD. The span at 103–112 shows a compositional bias: acidic residues; that stretch reads GAEDYTEADD.

It belongs to the MaoP family.

Functionally, involved in the organization of the Ori region of the chromosome into a macrodomain (MD). It constrains DNA mobility in the Ori macrodomain and limits long-distance DNA interactions with other chromosomal regions. The protein is Macrodomain Ori protein of Salmonella choleraesuis (strain SC-B67).